The chain runs to 323 residues: RNA polymerase sigma factor SigB (323 aa).

The interval 1 to 228 (MADAPTRATT…DMPVGSEEEA (228 aa)) is sufficient to interact with RbpA. The tract at residues 25–59 (DLVRVYLNGIGKTALLNAAGEVELAKRIEAGLYAE) is sigma-70 factor domain-1. The tract at residues 90–160 (LLEANLRLVV…TRGMADQSRT (71 aa)) is sigma-70 factor domain-2. Residues 114 to 117 (DLIQ) carry the Polymerase core binding motif. A sigma-70 factor domain-3 region spans residues 169 to 245 (EQVNKLARIK…DAEAMSAENA (77 aa)). The tract at residues 258 to 311 (VLATLDEREHQVIRLRFGLDDGQPRTLDQIGKLFGLSRERVRQIERDVMSKLRH) is sigma-70 factor domain-4. Positions 284 to 303 (LDQIGKLFGLSRERVRQIER) form a DNA-binding region, H-T-H motif.

The protein belongs to the sigma-70 factor family. Monomer. Interacts transiently with the RNA polymerase catalytic core formed by RpoA, RpoB, RpoC and RpoZ (2 alpha, 1 beta, 1 beta' and 1 omega subunit) to form the RNA polymerase holoenzyme that can initiate transcription.

Its function is as follows. Sigma factors are initiation factors that promote the attachment of RNA polymerase to specific initiation sites and are then released. A non-essential principal sigma factor that responds to cell envelope stress and hypoxia. This chain is RNA polymerase sigma factor SigB (sigB), found in Mycobacterium tuberculosis (strain CDC 1551 / Oshkosh).